We begin with the raw amino-acid sequence, 176 residues long: Large ribosomal subunit protein uL16 (176 aa).

Belongs to the universal ribosomal protein uL16 family.

The sequence is that of Large ribosomal subunit protein uL16 from Thermoplasma acidophilum (strain ATCC 25905 / DSM 1728 / JCM 9062 / NBRC 15155 / AMRC-C165).